Reading from the N-terminus, the 451-residue chain is Exodeoxyribonuclease 7 large subunit (451 aa).

It belongs to the XseA family. As to quaternary structure, heterooligomer composed of large and small subunits.

The protein localises to the cytoplasm. It catalyses the reaction Exonucleolytic cleavage in either 5'- to 3'- or 3'- to 5'-direction to yield nucleoside 5'-phosphates.. In terms of biological role, bidirectionally degrades single-stranded DNA into large acid-insoluble oligonucleotides, which are then degraded further into small acid-soluble oligonucleotides. The protein is Exodeoxyribonuclease 7 large subunit of Neisseria gonorrhoeae (strain ATCC 700825 / FA 1090).